The chain runs to 398 residues: uncharacterized protein (398 aa).

The signal sequence occupies residues 1 to 22 (MKLKFYKLPLITTAFSFVFLTA). Residue C23 is the site of N-palmitoyl cysteine attachment. The S-diacylglycerol cysteine moiety is linked to residue C23.

It is found in the cell membrane. This is an uncharacterized protein from Mycoplasma genitalium (strain ATCC 33530 / DSM 19775 / NCTC 10195 / G37) (Mycoplasmoides genitalium).